Consider the following 414-residue polypeptide: uncharacterized protein (414 aa).

Positions Lys-87–Asn-117 are disordered. The span at Thr-88 to Leu-101 shows a compositional bias: basic and acidic residues. A coiled-coil region spans residues Ser-243 to Arg-405.

This is an uncharacterized protein from Encephalitozoon cuniculi (strain GB-M1) (Microsporidian parasite).